Reading from the N-terminus, the 131-residue chain is Type IV wide pilus major component PilA4 (131 aa).

Residues methionine 1–glycine 6 constitute a propeptide, leader sequence. An N-methylphenylalanine modification is found at phenylalanine 7. The helical transmembrane segment at phenylalanine 7 to isoleucine 27 threads the bilayer. An intrachain disulfide couples cysteine 95 to cysteine 130.

Interacts with PilQ. Found in three forms of 14-kDa, 18-kDa and a glycosylated 23-kDa form. Both narrow and wide pili are glycosylated.

Its subcellular location is the cell inner membrane. It is found in the cell outer membrane. The protein localises to the periplasm. Its function is as follows. Plays an essential role in the assembly of two types of T4P pili: a wide and a narrow that participate in natural transformation and twitching motility. Major component of the wide pilus that is essential for natural transformation working as a DNA translocator structure that spans the inner and outer membranes. In addition, participates in the assembly of the narrow pilus composed of the PilA5 subunit that is required for twitching motility. The chain is Type IV wide pilus major component PilA4 (pilA4) from Thermus thermophilus (strain ATCC BAA-163 / DSM 7039 / HB27).